The sequence spans 724 residues: Aquaglyceroporin-4 (724 aa).

Disordered regions lie at residues Met-1–Arg-167, Ile-248–Asp-267, and Ala-302–Gly-396. Residues Met-1–Leu-434 lie on the Cytoplasmic side of the membrane. Residues Leu-87–Asp-96 show a composition bias toward polar residues. The span at Gln-252 to Gln-265 shows a compositional bias: low complexity. Composition is skewed to polar residues over residues Ser-307–Ser-325 and Pro-360–Glu-370. A helical membrane pass occupies residues Ala-435–Val-455. The Extracellular portion of the chain corresponds to Thr-456–Trp-472. Residues Ala-473–Leu-493 form a helical membrane-spanning segment. An NPA 1 motif is present at residues Asn-494–Ala-496. At Asn-494–Pro-513 the chain is on the cytoplasmic side. A helical membrane pass occupies residues Met-514 to Tyr-534. Residues Gln-535 to Ser-567 lie on the Extracellular side of the membrane. Residue Asn-565 is glycosylated (N-linked (GlcNAc...) asparagine). The helical transmembrane segment at Thr-568–Gly-588 threads the bilayer. Topologically, residues Asp-589 to Pro-595 are cytoplasmic. Residues Gly-596–Gly-616 form a helical membrane-spanning segment. Topologically, residues Tyr-617–Asp-647 are extracellular. Positions Asn-624–Ser-626 match the NPA 2 motif. The helical transmembrane segment at Val-648–Leu-668 threads the bilayer. Topologically, residues Tyr-669–Gln-724 are cytoplasmic.

This sequence belongs to the MIP/aquaporin (TC 1.A.8) family.

The protein resides in the membrane. It carries out the reaction H2O(in) = H2O(out). It catalyses the reaction glycerol(in) = glycerol(out). Its function is as follows. Water channel required to facilitate the transport of water across membranes. May play a role in the vegetative growth. This Botryotinia fuckeliana (strain B05.10) (Noble rot fungus) protein is Aquaglyceroporin-4.